Here is a 459-residue protein sequence, read N- to C-terminus: VGFKAGVKDYKLTYYTPDYETKDTDILAAFRVSPQPGVPPEEAGAAVAAESSTGTWTTVWTDGLTSLDRYKGRCYHIEPVAGEENQYIAYVAYPLDLFEEGSVTNMFTSIVGNVFGFKALRALRLEDLRIPTAYVKTFQGPPHGIQVERDKLNKYGRPLLGCTIKPKLGLSAKNYGRAVYECLRGGLDFTKDDENVNSQPFMRWRDRFVFCAEAIYKAQAETGEIKGHYLNATAGTCEEMMKRAIFARELGVPIVMHDYLTGGFTANTSLAHYCRDNGLLLHIHRAMHAVIDRQKNHGIHFRVLAKALRMSGGDHIHAGTVVGKLEGERDITLGFVDLLRDDFIEKDRSRGIYFTQDWVSLPGVLPVASGGIHVWHMPALTEIFGDDSVLQFGGGTLGHPWGNAPGAVANRVALEACVQARNEGRDLAREGNEIIREASKWSPELAAACEVWKEIKFEF.

K4 carries the post-translational modification N6,N6,N6-trimethyllysine. Positions 113 and 163 each coordinate substrate. Catalysis depends on K165, which acts as the Proton acceptor. K167 contacts substrate. Mg(2+) is bound by residues K191, D193, and E194. The residue at position 191 (K191) is an N6-carboxylysine. H284 (proton acceptor) is an active-site residue. Positions 285, 317, and 369 each coordinate substrate.

Belongs to the RuBisCO large chain family. Type I subfamily. In terms of assembly, heterohexadecamer of 8 large chains and 8 small chains; disulfide-linked. The disulfide link is formed within the large subunit homodimers. Mg(2+) serves as cofactor. In terms of processing, the disulfide bond which can form in the large chain dimeric partners within the hexadecamer appears to be associated with oxidative stress and protein turnover.

The protein localises to the plastid. Its subcellular location is the chloroplast. It carries out the reaction 2 (2R)-3-phosphoglycerate + 2 H(+) = D-ribulose 1,5-bisphosphate + CO2 + H2O. The enzyme catalyses D-ribulose 1,5-bisphosphate + O2 = 2-phosphoglycolate + (2R)-3-phosphoglycerate + 2 H(+). Its function is as follows. RuBisCO catalyzes two reactions: the carboxylation of D-ribulose 1,5-bisphosphate, the primary event in carbon dioxide fixation, as well as the oxidative fragmentation of the pentose substrate in the photorespiration process. Both reactions occur simultaneously and in competition at the same active site. In Ceratopetalum gummiferum (New South Wales Christmas bush), this protein is Ribulose bisphosphate carboxylase large chain.